A 225-amino-acid polypeptide reads, in one-letter code: Uracil phosphoribosyltransferase (225 aa).

36–40 (KGLVR) contacts GTP. Residues Arg-86, Arg-111, and 145 to 153 (DPMLATGST) each bind 5-phospho-alpha-D-ribose 1-diphosphate. Residues Ile-210 and 215–217 (GDA) contribute to the uracil site. Asp-216 is a binding site for 5-phospho-alpha-D-ribose 1-diphosphate.

This sequence belongs to the UPRTase family. Requires Mg(2+) as cofactor.

The enzyme catalyses UMP + diphosphate = 5-phospho-alpha-D-ribose 1-diphosphate + uracil. It participates in pyrimidine metabolism; UMP biosynthesis via salvage pathway; UMP from uracil: step 1/1. Allosterically activated by GTP. In terms of biological role, catalyzes the conversion of uracil and 5-phospho-alpha-D-ribose 1-diphosphate (PRPP) to UMP and diphosphate. The chain is Uracil phosphoribosyltransferase from Haloarcula marismortui (strain ATCC 43049 / DSM 3752 / JCM 8966 / VKM B-1809) (Halobacterium marismortui).